Reading from the N-terminus, the 250-residue chain is Endomucin (250 aa).

A signal peptide spans 1–20; sequence MRLLQVTALFFLLSNSLCRG. 2 stretches are compositionally biased toward low complexity: residues 24–38 and 45–60; these read KALTETSTTKASATT and TNKSTGGTPPKGTTNS. Disordered regions lie at residues 24-83 and 105-153; these read KALT…ETTT and NAVS…LTTA. N-linked (GlcNAc...) asparagine glycosylation is found at Asn-46, Asn-115, and Asn-119. Composition is skewed to polar residues over residues 105 to 135 and 143 to 153; these read NAVSTLSSPQNKTENQSSIRTTEISGTNQLP and TETPSASLTTA. The helical transmembrane segment at 180–200 threads the bilayer; the sequence is VILPVVIALIVITVLVFTLVG. Positions 210–250 are disordered; sequence PGTPESGNDQPQSDKESVKLLTVKTISHESGEHSAQGKAKN. Position 226 is a phosphoserine (Ser-226).

In terms of processing, highly O-glycosylated. Sialic acid-rich glycoprotein.

It is found in the membrane. Its function is as follows. Endothelial sialomucin, also called endomucin or mucin-like sialoglycoprotein, which interferes with the assembly of focal adhesion complexes and inhibits interaction between cells and the extracellular matrix. The sequence is that of Endomucin (Emcn) from Rattus norvegicus (Rat).